Here is a 101-residue protein sequence, read N- to C-terminus: MAKTSAVNRNKMRERMASRDKAKRAALKAIVMDRSLPVEDRFEATLRLAQLPRNGAANRVRLRCELTGRPRANYRKFKLCRVALRDLASSGQIPGLVKASW.

The tract at residues 1–20 (MAKTSAVNRNKMRERMASRD) is disordered. Residues 11 to 20 (KMRERMASRD) are compositionally biased toward basic and acidic residues.

It belongs to the universal ribosomal protein uS14 family. Part of the 30S ribosomal subunit. Contacts proteins S3 and S10.

Binds 16S rRNA, required for the assembly of 30S particles and may also be responsible for determining the conformation of the 16S rRNA at the A site. The chain is Small ribosomal subunit protein uS14 from Granulibacter bethesdensis (strain ATCC BAA-1260 / CGDNIH1).